The chain runs to 53 residues: Small ribosomal subunit protein uS14 (53 aa).

4 residues coordinate Zn(2+): cysteine 18, cysteine 21, cysteine 36, and cysteine 39.

This sequence belongs to the universal ribosomal protein uS14 family. Zinc-binding uS14 subfamily. Part of the 30S ribosomal subunit. Zn(2+) is required as a cofactor.

Functionally, binds 16S rRNA, required for the assembly of 30S particles. This is Small ribosomal subunit protein uS14 from Thermoplasma volcanium (strain ATCC 51530 / DSM 4299 / JCM 9571 / NBRC 15438 / GSS1).